The primary structure comprises 195 residues: L-rhamnose-binding lectin CSL3 (195 aa).

SUEL-type lectin domains follow at residues 1-95 (AISI…YSCV) and 105-195 (ICEG…YTCD).

L-rhamnose binding lectin. Has hemagglutinating activity towards rabbit erythrocytes, human type A erythrocytes, human type B erythrocytes, human type O erythrocytes and sheep erythrocytes. Hemagglutinating activity is inhibited by smooth-type lipopolysaccharide (LPS) from S.flexneri 1A, A.salmonicida and E.coli K12, but not by rough-type LPS from S.flexneri, E.coli K12 and E.coli EH100. Agglutinates E.coli K12 and B.subtilis. This is L-rhamnose-binding lectin CSL3 from Oncorhynchus keta (Chum salmon).